A 232-amino-acid polypeptide reads, in one-letter code: UPF0502 protein Aave_3438 (232 aa).

Belongs to the UPF0502 family.

This is UPF0502 protein Aave_3438 from Paracidovorax citrulli (strain AAC00-1) (Acidovorax citrulli).